Here is a 320-residue protein sequence, read N- to C-terminus: Cilia- and flagella-associated protein 77 (320 aa).

The disordered stretch occupies residues 1–27; the sequence is MPEARSSGPDLTRWRKQQQPVRRTVSQ. Residues 17-27 show a composition bias toward polar residues; sequence QQQPVRRTVSQ.

This sequence belongs to the CFAP77 family. In terms of assembly, microtubule inner protein component of sperm flagellar doublet microtubules. As to expression, expressed in airway epithelial cells.

It is found in the cytoplasm. Its subcellular location is the cytoskeleton. The protein resides in the cilium axoneme. It localises to the flagellum axoneme. Its function is as follows. Microtubule inner protein (MIP) part of the dynein-decorated doublet microtubules (DMTs) in cilia axoneme, which is required for motile cilia beating. The polypeptide is Cilia- and flagella-associated protein 77 (Homo sapiens (Human)).